A 383-amino-acid chain; its full sequence is Acetylornithine deacetylase (383 aa).

His80 is a Zn(2+) binding site. Residue Asp82 is part of the active site. Asp112 provides a ligand contact to Zn(2+). Glu144 is an active-site residue. Glu145, Glu169, and His355 together coordinate Zn(2+).

This sequence belongs to the peptidase M20A family. ArgE subfamily. Homodimer. Zn(2+) is required as a cofactor. Co(2+) serves as cofactor. It depends on glutathione as a cofactor.

It localises to the cytoplasm. It carries out the reaction N(2)-acetyl-L-ornithine + H2O = L-ornithine + acetate. It participates in amino-acid biosynthesis; L-arginine biosynthesis; L-ornithine from N(2)-acetyl-L-ornithine (linear): step 1/1. Its function is as follows. Catalyzes the hydrolysis of the amide bond of N(2)-acetylated L-amino acids. Cleaves the acetyl group from N-acetyl-L-ornithine to form L-ornithine, an intermediate in L-arginine biosynthesis pathway, and a branchpoint in the synthesis of polyamines. This is Acetylornithine deacetylase from Pectobacterium carotovorum subsp. carotovorum (strain PC1).